We begin with the raw amino-acid sequence, 205 residues long: Protein-L-isoaspartate O-methyltransferase (205 aa).

Serine 52 is an active-site residue.

It belongs to the methyltransferase superfamily. L-isoaspartyl/D-aspartyl protein methyltransferase family.

The protein resides in the cytoplasm. The enzyme catalyses [protein]-L-isoaspartate + S-adenosyl-L-methionine = [protein]-L-isoaspartate alpha-methyl ester + S-adenosyl-L-homocysteine. Catalyzes the methyl esterification of L-isoaspartyl residues in peptides and proteins that result from spontaneous decomposition of normal L-aspartyl and L-asparaginyl residues. It plays a role in the repair and/or degradation of damaged proteins. The chain is Protein-L-isoaspartate O-methyltransferase from Gloeobacter violaceus (strain ATCC 29082 / PCC 7421).